We begin with the raw amino-acid sequence, 219 residues long: Inner membrane protein YghB (219 aa).

Topologically, residues 1-17 (MAVIQDIIAALWQHDFA) are cytoplasmic. Residues 18-38 (ALADPHIVSVVYFVMFATLFL) form a helical membrane-spanning segment. Topologically, residues 39 to 67 (ENGLLPASFLPGDSLLILAGALIAQGVMD) are periplasmic. A helical transmembrane segment spans residues 68–88 (FLPTIAILTAAASLGCWLSYI). Residues 89-160 (QGRWLGNTKT…RRFQFFNWLS (72 aa)) are Cytoplasmic-facing. A helical membrane pass occupies residues 161-181 (GLLWVSVVTSFGYALSMIPFV). Residues 182-191 (KRHEDQVMTF) lie on the Periplasmic side of the membrane. The chain crosses the membrane as a helical span at residues 192–212 (LMILPIALLTAGLLGTLFVVI). Over 213–219 (KKKYCNA) the chain is Cytoplasmic.

This sequence belongs to the DedA family.

The protein resides in the cell inner membrane. The chain is Inner membrane protein YghB (yghB) from Escherichia coli O6:H1 (strain CFT073 / ATCC 700928 / UPEC).